A 572-amino-acid chain; its full sequence is Protein misato homolog 1 (572 aa).

It belongs to the misato family.

The protein localises to the mitochondrion outer membrane. It localises to the cytoplasm. Functionally, involved in the regulation of mitochondrial distribution and morphology. Required for mitochondrial fusion and mitochondrial network formation. The sequence is that of Protein misato homolog 1 (MSTO1) from Bos taurus (Bovine).